The following is a 349-amino-acid chain: UPF0324 inner membrane protein YeiH (349 aa).

The Periplasmic portion of the chain corresponds to 1-12 (MTELTLQNHRRT). The chain crosses the membrane as a helical span at residues 13–35 (MWHFIPGLALSAVITGVALWGGA). The Cytoplasmic portion of the chain corresponds to 36–38 (IPA). Residues 39–61 (VAGAGFSALTLAILLGMVIGNTV) form a helical membrane-spanning segment. The Periplasmic portion of the chain corresponds to 62 to 99 (YPQIWKQCDGGVLFAKQHLLRLGIILYGFRLTFSQIAD). Residues 100-122 (VGISGIVIDVLTLSSTFMLACFL) traverse the membrane as a helical segment. The Cytoplasmic portion of the chain corresponds to 123–131 (GQKVFGLDR). The helical transmembrane segment at 132–151 (HTSWLIGAGSSICGAAAVLA) threads the bilayer. Residues 152 to 162 (TEPVVKAEASK) lie on the Periplasmic side of the membrane. A helical membrane pass occupies residues 163–185 (VTVAVATVVIFGTIAIFLYPAMY). The Cytoplasmic segment spans residues 186–261 (PLLAHWFSPE…SPATGAEKSK (76 aa)). A helical membrane pass occupies residues 262–284 (ITIPWFAIFFIVVAIFNSFHLLP). At 285–290 (KAVVDM) the chain is on the periplasmic side. A helical transmembrane segment spans residues 291-313 (LVTLDTVLLAMAMAALGLTTHVS). Residues 314–322 (ALKKAGAKP) are Cytoplasmic-facing. Residues 323-345 (LLMALALFAWLIIGGGAINVLIH) form a helical membrane-spanning segment. Residues 346–349 (SLIA) lie on the Periplasmic side of the membrane.

Belongs to the UPF0324 family.

It is found in the cell inner membrane. This chain is UPF0324 inner membrane protein YeiH (yeiH), found in Salmonella typhi.